The chain runs to 83 residues: Cytochrome b559 subunit alpha (83 aa).

A helical membrane pass occupies residues 22–36 (VIHSITIPALFIAGW). H24 serves as a coordination point for heme.

This sequence belongs to the PsbE/PsbF family. As to quaternary structure, heterodimer of an alpha subunit and a beta subunit. PSII is composed of 1 copy each of membrane proteins PsbA, PsbB, PsbC, PsbD, PsbE, PsbF, PsbH, PsbI, PsbJ, PsbK, PsbL, PsbM, PsbT, PsbX, PsbY, PsbZ, Psb30/Ycf12, peripheral proteins PsbO, CyanoQ (PsbQ), PsbU, PsbV and a large number of cofactors. It forms dimeric complexes. Heme b is required as a cofactor.

It is found in the cellular thylakoid membrane. Its function is as follows. This b-type cytochrome is tightly associated with the reaction center of photosystem II (PSII). PSII is a light-driven water:plastoquinone oxidoreductase that uses light energy to abstract electrons from H(2)O, generating O(2) and a proton gradient subsequently used for ATP formation. It consists of a core antenna complex that captures photons, and an electron transfer chain that converts photonic excitation into a charge separation. The polypeptide is Cytochrome b559 subunit alpha (Synechococcus elongatus (strain ATCC 33912 / PCC 7942 / FACHB-805) (Anacystis nidulans R2)).